Here is a 288-residue protein sequence, read N- to C-terminus: MAGAKEIRSKIASIKSTQKITSAMEKVAVSKMRKAQMRMAASRPYAERIRQVIGHLAYANPEYRHPFMVERPVKRVGYIVVSTDRGLCGGLNINLFKVLIKNMKEWHDQKVEVDLCVIGNKGASFFRSFGGNVVAAIGNLGEEPSINDLIGSVKVMLDGFHEGRIDRLYLVSNKFINTMTQKPTLDQLLPLAADDSAEPVKKGQWDYLYEPDAQQLLDALLVRFIESQVYQAVVENGAAEQAARMIAMKNATDNAGELISDLQLVYNKARQAAITQEISEIVGGAAAV.

Belongs to the ATPase gamma chain family. In terms of assembly, F-type ATPases have 2 components, CF(1) - the catalytic core - and CF(0) - the membrane proton channel. CF(1) has five subunits: alpha(3), beta(3), gamma(1), delta(1), epsilon(1). CF(0) has three main subunits: a, b and c.

The protein localises to the cell inner membrane. Its function is as follows. Produces ATP from ADP in the presence of a proton gradient across the membrane. The gamma chain is believed to be important in regulating ATPase activity and the flow of protons through the CF(0) complex. The protein is ATP synthase gamma chain of Stutzerimonas stutzeri (strain A1501) (Pseudomonas stutzeri).